A 180-amino-acid chain; its full sequence is Early nodulin-16 (180 aa).

Residues methionine 1–serine 22 form the signal peptide. One can recognise a Phytocyanin domain in the interval threonine 25–asparagine 129. A glycan (N-linked (GlcNAc...) asparagine) is linked at asparagine 67. Cysteines 83 and 117 form a disulfide. N-linked (GlcNAc...) asparagine glycosylation occurs at asparagine 152. Serine 154 carries GPI-anchor amidated serine lipidation. Positions glycine 155–isoleucine 180 are cleaved as a propeptide — removed in mature form.

It belongs to the early nodulin-like (ENODL) family. As to expression, expressed in developing nodules upon symbiosis with Sinorhizobium meliloti.

It is found in the symbiosome. It localises to the cell membrane. Functionally, may act as a carbohydrate transporter. The protein is Early nodulin-16 of Medicago truncatula (Barrel medic).